The primary structure comprises 449 residues: uncharacterized protein (449 aa).

The protein localises to the mitochondrion. This is an uncharacterized protein from Podospora anserina (strain S / ATCC MYA-4624 / DSM 980 / FGSC 10383) (Pleurage anserina).